The following is a 257-amino-acid chain: MQKVTIQEAEHLLQEIMSEEDDRFQILIKDERKGVQKLISKWYKQKELAQKEKEKFLEMSKYENALREKGLTYIAGIDEVGRGPLAGPVVTAAVILPEDFYIPGLNDSKKLSEAKRERFYDEIKAQAIAIGVGIVSPQVIDEINIYQATKQAMLDAVANLSCTPEYLLIDAMKLPTPIPQTSIIKGDAKSISISAASIIAKVTRDRMMKELGEKYPAYGFEQHMGYGTKQHLEAIEVHGVLEEHRKSFAPIKDMIQK.

The RNase H type-2 domain maps to 72–257 (TYIAGIDEVG…FAPIKDMIQK (186 aa)). Positions 78, 79, and 170 each coordinate a divalent metal cation.

It belongs to the RNase HII family. The cofactor is Mn(2+). It depends on Mg(2+) as a cofactor.

It localises to the cytoplasm. It catalyses the reaction Endonucleolytic cleavage to 5'-phosphomonoester.. In terms of biological role, endonuclease that specifically degrades the RNA of RNA-DNA hybrids. The chain is Ribonuclease HII from Bacillus cereus (strain ZK / E33L).